Consider the following 359-residue polypeptide: Protein HEXIM1 (359 aa).

The disordered stretch occupies residues 1–163 (MAEPFLSEYQ…RRRPSKKKRH (163 aa)). Residues 9–19 (YQHQPQTSNCT) show a composition bias toward polar residues. Composition is skewed to basic and acidic residues over residues 34–47 (PGAE…DSRW) and 84–93 (CLREGEKGQN). Phosphoserine is present on residues S97 and S98. Residues 148-163 (LGKKKHRRRPSKKKRH) show a composition bias toward basic residues. Residues 150 to 177 (KKKHRRRPSKKKRHWKPYYKLTWEEKKK) form a basic region; mediates nuclear localization and interaction with 7SK snRNA and NR3C1 region. The interaction with P-TEFb stretch occupies residues 202-205 (PYNT). Residues 210 to 250 (MDDHDQEEPDLKTGLYSKRAAAKSDDTSDDDFMEEGGEEDG) are autoinhibitory acidic region; in absence of 7SK snRNA interacts with the basic region preventing interaction with P-TEFb and modulating subcellular localization. The segment at 213–262 (HDQEEPDLKTGLYSKRAAAKSDDTSDDDFMEEGGEEDGGSDGMGGDGSEF) is disordered. S233 is subject to Phosphoserine. T236 bears the Phosphothreonine mark. Positions 236–251 (TSDDDFMEEGGEEDGG) are enriched in acidic residues. S237, S252, and S260 each carry phosphoserine. A coiled-coil region spans residues 283-349 (SKQELIKEYL…LTENELHRQQ (67 aa)). Positions 286–314 (ELIKEYLELEKCLSRMEDENNRLRLESKR) are mediates interaction with CCNT1. The interval 310–355 (LESKRLGGDDARVRELELELDRLRAENLQLLTENELHRQQERAPLS) is required for inhibition of ESR1-dependent transcription.

This sequence belongs to the HEXIM family. In terms of assembly, homooligomer and heterooligomer with HEXIM2; probably dimeric. Core component of the 7SK RNP complex, at least composed of 7SK RNA, LARP7, MEPCE, HEXIM1 (or HEXIM2) and P-TEFb (composed of CDK9 and CCNT1/cyclin-T1). Interacts with the N-CoR complex through NCOR1. Interacts with ESR1 and NR3C1. May interact with NF-kappa-B through RELA. Interacts with CCNT2; mediates formation of a tripartite complex with KPNA2. Part of the HDP-RNP complex composed of at least HEXIM1, PRKDC, XRCC5, XRCC6, paraspeckle proteins (SFPQ, NONO, PSPC1, RBM14, and MATR3) and NEAT1 non-coding RNA. Ubiquitously expressed with higher expression in placenta. HEXIM1 and HEXIM2 are differentially expressed. Expressed in endocrine tissues.

The protein localises to the nucleus. It is found in the cytoplasm. Transcriptional regulator which functions as a general RNA polymerase II transcription inhibitor. Core component of the 7SK RNP complex: in cooperation with 7SK snRNA sequesters P-TEFb in a large inactive 7SK snRNP complex preventing RNA polymerase II phosphorylation and subsequent transcriptional elongation. May also regulate NF-kappa-B, ESR1, NR3C1 and CIITA-dependent transcriptional activity. Plays a role in the regulation of DNA virus-mediated innate immune response by assembling into the HDP-RNP complex, a complex that serves as a platform for IRF3 phosphorylation and subsequent innate immune response activation through the cGAS-STING pathway. The chain is Protein HEXIM1 (HEXIM1) from Homo sapiens (Human).